We begin with the raw amino-acid sequence, 130 residues long: Large ribosomal subunit protein bL12 (130 aa).

The protein belongs to the bacterial ribosomal protein bL12 family. Homodimer. Part of the ribosomal stalk of the 50S ribosomal subunit. Forms a multimeric L10(L12)X complex, where L10 forms an elongated spine to which 2 to 4 L12 dimers bind in a sequential fashion. Binds GTP-bound translation factors.

Functionally, forms part of the ribosomal stalk which helps the ribosome interact with GTP-bound translation factors. Is thus essential for accurate translation. In Cutibacterium acnes (strain DSM 16379 / KPA171202) (Propionibacterium acnes), this protein is Large ribosomal subunit protein bL12.